A 279-amino-acid chain; its full sequence is Putative cysteine-rich repeat secretory protein 22 (279 aa).

The signal sequence occupies residues 1 to 31 (MSSSSASKLLGSVLVFAMISVQIVFIHCVMS). 2 Gnk2-homologous domains span residues 44–146 (YLHH…PINS) and 152–276 (YEYN…LYRF).

It belongs to the cysteine-rich repeat secretory protein family.

It is found in the secreted. In Arabidopsis thaliana (Mouse-ear cress), this protein is Putative cysteine-rich repeat secretory protein 22 (CRRSP22).